The primary structure comprises 381 residues: Lipopolysaccharide 1,2-N-acetylglucosaminetransferase (381 aa).

The protein belongs to the glycosyltransferase group 1 family. Glycosyltransferase 4 subfamily.

The protein resides in the cell inner membrane. It carries out the reaction UDP-N-acetyl-alpha-D-glucosamine + [lipopolysaccharide] = UDP + N-acetyl-alpha-D-glucosaminyl-[lipopolysaccharide].. Its pathway is bacterial outer membrane biogenesis; LPS core biosynthesis. In terms of biological role, transferase involved in the biosynthesis of the core oligosaccharide region of lipopolysaccharide (LPS). Catalyzes the addition of the terminal N-acetyl-D-glucosamine (GlcNAc) group to the outer-core glucose II, the last step of the lipid A-core oligosaccharide biosynthesis. This Salmonella typhimurium (strain LT2 / SGSC1412 / ATCC 700720) protein is Lipopolysaccharide 1,2-N-acetylglucosaminetransferase.